A 448-amino-acid chain; its full sequence is Phosphoglucosamine mutase (448 aa).

The Phosphoserine intermediate role is filled by serine 100. Residues serine 100, aspartate 240, aspartate 242, and aspartate 244 each coordinate Mg(2+). Serine 100 carries the post-translational modification Phosphoserine.

The protein belongs to the phosphohexose mutase family. It depends on Mg(2+) as a cofactor. In terms of processing, activated by phosphorylation.

It carries out the reaction alpha-D-glucosamine 1-phosphate = D-glucosamine 6-phosphate. Its function is as follows. Catalyzes the conversion of glucosamine-6-phosphate to glucosamine-1-phosphate. This chain is Phosphoglucosamine mutase, found in Bacillus cereus (strain G9842).